Here is a 264-residue protein sequence, read N- to C-terminus: Type III pantothenate kinase 2 (264 aa).

Asp6 to Val13 serves as a coordination point for ATP. Residues Tyr100 and Gly107 to Arg110 contribute to the substrate site. The active-site Proton acceptor is Asp109. Position 129 (Asp129) interacts with K(+). Residue Thr132 participates in ATP binding. Thr184 lines the substrate pocket.

It belongs to the type III pantothenate kinase family. In terms of assembly, homodimer. It depends on NH4(+) as a cofactor. K(+) serves as cofactor.

The protein resides in the cytoplasm. It carries out the reaction (R)-pantothenate + ATP = (R)-4'-phosphopantothenate + ADP + H(+). Its pathway is cofactor biosynthesis; coenzyme A biosynthesis; CoA from (R)-pantothenate: step 1/5. Its function is as follows. Catalyzes the phosphorylation of pantothenate (Pan), the first step in CoA biosynthesis. In Symbiobacterium thermophilum (strain DSM 24528 / JCM 14929 / IAM 14863 / T), this protein is Type III pantothenate kinase 2.